We begin with the raw amino-acid sequence, 421 residues long: MLDIKLILKNKDFVISKLKQRSNFNVSEIEKLYTLGTERANILISLSELQSKRNEISSKIGEAKRNKTDALFFMDEVENIKKELSILEEKSTKIENKIQELISFIPNIPLDDVPFGKDDTDNVILKEFPKIGRGLVKAKKPHYEIGVEKDLIDFSRGAKLSGSRFIVYKNAGAKLIRALESFMLDTHEKNGYSEIMPPFLVNSKMMYGTGQLPKFKEDLFKIEGHDLYLIPTAEVPVTNLFNNEIIDLEKNSKFSSFTNCFRSEAGSAGRDTKGIIRLHQFNKVELVEFASEQKSLRAFNSVLKNAKYLLELLEIPYREVLLCTGDLGFSSRKTIDLELWLPSEQRYREVSSVSYFGDFQSRRSMIRYRDENKNTQYVHTINGSGLAIDRVLAAILEQYQNDDGSISVPKVLIPYLNVEKI.

An L-serine-binding site is contributed by 232 to 234 (TAE). 262 to 264 (RSE) is an ATP binding site. Glutamate 285 contributes to the L-serine binding site. 349 to 352 (EVSS) lines the ATP pocket. Serine 384 contributes to the L-serine binding site.

The protein belongs to the class-II aminoacyl-tRNA synthetase family. Type-1 seryl-tRNA synthetase subfamily. As to quaternary structure, homodimer. The tRNA molecule binds across the dimer.

It localises to the cytoplasm. The enzyme catalyses tRNA(Ser) + L-serine + ATP = L-seryl-tRNA(Ser) + AMP + diphosphate + H(+). It carries out the reaction tRNA(Sec) + L-serine + ATP = L-seryl-tRNA(Sec) + AMP + diphosphate + H(+). Its pathway is aminoacyl-tRNA biosynthesis; selenocysteinyl-tRNA(Sec) biosynthesis; L-seryl-tRNA(Sec) from L-serine and tRNA(Sec): step 1/1. Functionally, catalyzes the attachment of serine to tRNA(Ser). Is also able to aminoacylate tRNA(Sec) with serine, to form the misacylated tRNA L-seryl-tRNA(Sec), which will be further converted into selenocysteinyl-tRNA(Sec). The protein is Serine--tRNA ligase of Mycoplasma mobile (strain ATCC 43663 / 163K / NCTC 11711) (Mesomycoplasma mobile).